The sequence spans 244 residues: tRNA pseudouridine synthase A (244 aa).

The active-site Nucleophile is Asp-52. Residue Tyr-110 participates in substrate binding.

It belongs to the tRNA pseudouridine synthase TruA family. As to quaternary structure, homodimer.

The catalysed reaction is uridine(38/39/40) in tRNA = pseudouridine(38/39/40) in tRNA. Functionally, formation of pseudouridine at positions 38, 39 and 40 in the anticodon stem and loop of transfer RNAs. The sequence is that of tRNA pseudouridine synthase A from Caldicellulosiruptor bescii (strain ATCC BAA-1888 / DSM 6725 / KCTC 15123 / Z-1320) (Anaerocellum thermophilum).